Reading from the N-terminus, the 111-residue chain is PHD finger-like domain-containing protein 5A (111 aa).

It belongs to the PHF5 family.

This chain is PHD finger-like domain-containing protein 5A, found in Drosophila melanogaster (Fruit fly).